The following is a 387-amino-acid chain: MKQAVIVDCIRTPMGRSKAGVFRNVRAETLSAELMKGLLLRNPQLDPNLIEDVIWGCVQQTLEQGFNIARNASLLAGIPKTAGAVTVNRLCGSSMDAIHQAARAIMTGMGDTFIIGGVEHMGHVPMSHGVDFHPGLANNVAKASGMMGLTAEMLGKLHGITREQQDAFAVRSHQRAYAATVEGRFAKEIYGIEGHDANGALIKVLQDEVIRPETTMESLAALRPVFDPVNGTVTAGTSSALSDGASAMLIMEESKARALGLPIRARIRSMAVAGCDAAIMGYGPVPATQKALARAGITVADLDVIELNEAFAAQSLPCVKDLGLADVVDDKINLNGGAIALGHPLGCSGARISTTLINLMEDKDATLGLATMCIGLGQGIATVFERV.

Cys-91 (acyl-thioester intermediate) is an active-site residue. Catalysis depends on proton acceptor residues His-343 and Cys-373.

This sequence belongs to the thiolase-like superfamily. Thiolase family. As to quaternary structure, heterotetramer of two alpha chains (FadB) and two beta chains (FadA).

Its subcellular location is the cytoplasm. The catalysed reaction is an acyl-CoA + acetyl-CoA = a 3-oxoacyl-CoA + CoA. It functions in the pathway lipid metabolism; fatty acid beta-oxidation. Its function is as follows. Catalyzes the final step of fatty acid oxidation in which acetyl-CoA is released and the CoA ester of a fatty acid two carbons shorter is formed. This is 3-ketoacyl-CoA thiolase from Shewanella baltica (strain OS185).